Consider the following 412-residue polypeptide: Poly-beta-1,6-N-acetyl-D-glucosamine synthase (412 aa).

A run of 4 helical transmembrane segments spans residues Phe6–Tyr26, Ile298–Ala318, Ile332–Leu352, and Leu366–Val386.

Belongs to the glycosyltransferase 2 family.

The protein localises to the cell membrane. Its function is as follows. N-acetylglucosaminyltransferase that catalyzes the polymerization of single monomer units of UDP-N-acetylglucosamine to produce the linear homomer poly-beta-1,6-N-acetyl-D-glucosamine (PNAG, also referred to as PIA), a biofilm adhesin polysaccharide. Requires IcaD for full activity. The sequence is that of Poly-beta-1,6-N-acetyl-D-glucosamine synthase (icaA) from Staphylococcus aureus (strain NCTC 8325 / PS 47).